We begin with the raw amino-acid sequence, 650 residues long: Chaperone protein DnaK (650 aa).

T200 is subject to Phosphothreonine; by autocatalysis. Residues 613-634 (QAGAAGAAGAAAAEGAAQGGAQ) are compositionally biased toward low complexity. The interval 613 to 637 (QAGAAGAAGAAAAEGAAQGGAQTAD) is disordered.

Belongs to the heat shock protein 70 family.

Its function is as follows. Acts as a chaperone. In Burkholderia thailandensis (strain ATCC 700388 / DSM 13276 / CCUG 48851 / CIP 106301 / E264), this protein is Chaperone protein DnaK.